A 599-amino-acid chain; its full sequence is Elongation factor 4 (599 aa).

A tr-type G domain is found at 2 to 184 (KNIRNFSIIA…RLVRDIPPPQ (183 aa)). GTP is bound by residues 14-19 (DHGKST) and 131-134 (NKID).

This sequence belongs to the TRAFAC class translation factor GTPase superfamily. Classic translation factor GTPase family. LepA subfamily.

The protein resides in the cell inner membrane. The catalysed reaction is GTP + H2O = GDP + phosphate + H(+). Its function is as follows. Required for accurate and efficient protein synthesis under certain stress conditions. May act as a fidelity factor of the translation reaction, by catalyzing a one-codon backward translocation of tRNAs on improperly translocated ribosomes. Back-translocation proceeds from a post-translocation (POST) complex to a pre-translocation (PRE) complex, thus giving elongation factor G a second chance to translocate the tRNAs correctly. Binds to ribosomes in a GTP-dependent manner. In Salmonella gallinarum (strain 287/91 / NCTC 13346), this protein is Elongation factor 4.